Reading from the N-terminus, the 315-residue chain is 4-carboxy-2-hydroxymuconate-6-semialdehyde dehydrogenase (315 aa).

This sequence belongs to the Gfo/Idh/MocA family. As to quaternary structure, homodimer.

It carries out the reaction 4-carboxy-2-hydroxymuconate semialdehyde hemiacetal + NADP(+) = 2-oxo-2H-pyran-4,6-dicarboxylate + NADPH + H(+). It functions in the pathway secondary metabolite metabolism; lignin degradation. With respect to regulation, inhibited by p-chloromercuribenzoate (10 mM), HgCl2 (10 mM), or 5,5-dithiobis(2-nitrobenzoate) (100 mM). Its function is as follows. Involved in the degradation of protocatechuate (PCA) via the PCA 4,5-cleavage pathway. Catalyzes the oxidation of the hemiacetal form of 4-carboxy-2-hydroxymuconate-6-semialdehyde (CHMS) to produce 2-pyrone-4,6-dicarboxylate (PDC). LigC has 10-times-higher affinity to NADP than to NAD. In Sphingobium sp. (strain NBRC 103272 / SYK-6), this protein is 4-carboxy-2-hydroxymuconate-6-semialdehyde dehydrogenase (ligC).